We begin with the raw amino-acid sequence, 623 residues long: MTQTDRDAENGRDREKDREKEQQRGVKRPIMPAAVPEPVQEQIQANFIVVIHPGSRTLRLGRATDTLPISVPHVIARRHKHPGQSRYEDKCLLREGLNSADSNEQRQNGLKMVDQVIWSKKMSNGVRRTPVSAEQARLYNRQIRPAVLDPNSKVSWTNTSHHPEYVVGEEALYVNPTDCYSVHWPVCRGRLNLHSGSGGSLSAVMMDLEHIWTHALQKLLQIPLKDLKYYRCILLIPDIYNRQHVKEIVNMLLVKMGFSAVVVHQESVCATFGSGLSSACVVDVGDQKTSVCCVEDGVSHRSSRLCLAYGGSDVTRCFFWLMQRAGFPYRDCQLGNKLDCVLLQQLKESFCHLDQDISGLQDHEFRTRFPDSPVLLYQLRLGDEKLQAPMTLFYPAAFGIVGQRMTSLLHRSQGDAEDPHDEHFLLTTQSKQDQSSKASADRKSFPKPSSFEGESSVCEVSDRSSLGQDLDLGHSQAECLVGGAETEETPSALLSRKTAMSQFEGKALGIDKAILHSIDSCASDETKRKMYSCILVVGGGLLFHGAQEFLQHRILNKMPPSFRCMVESVDVITRPKDTDARVCVWKGGSVLACLDTTQELWIHQREWQRFGVRMLRERAAFVW.

Residues 1-24 (MTQTDRDAENGRDREKDREKEQQR) are compositionally biased toward basic and acidic residues. Residues 1–29 (MTQTDRDAENGRDREKDREKEQQRGVKRP) form a disordered region. 283 to 286 (DVGD) contacts ATP. Residues 428 to 438 (TQSKQDQSSKA) show a composition bias toward low complexity. The segment at 428-458 (TQSKQDQSSKASADRKSFPKPSSFEGESSVC) is disordered.

It belongs to the actin family. ARP8 subfamily. As to quaternary structure, component of the chromatin remodeling INO80 complex; specifically part of a complex module associated with the DBINO domain of INO80. Exists as monomers and dimers, but the dimer is most probably the biologically relevant form required for stable interactions with histones that exploits the twofold symmetry of the nucleosome core.

It is found in the nucleus. It localises to the chromosome. Plays an important role in the functional organization of mitotic chromosomes. Exhibits low basal ATPase activity, and unable to polymerize. Its function is as follows. Proposed core component of the chromatin remodeling INO80 complex which is involved in transcriptional regulation, DNA replication and probably DNA repair. Required for the recruitment of INO80 (and probably the INO80 complex) to sites of DNA damage Strongly prefer nucleosomes and H3-H4 tetramers over H2A-H2B dimers, suggesting it may act as a nucleosome recognition module within the complex. This is Actin-related protein 8 (actr8) from Danio rerio (Zebrafish).